A 436-amino-acid chain; its full sequence is Hydrogenobyrinate a,c-diamide synthase (436 aa).

One can recognise a GATase cobBQ-type domain in the interval 244–435 (HIAVARDDAF…MHVIDFCGEK (192 aa)). The Nucleophile role is filled by Cys327.

This sequence belongs to the CobB/CbiA family. The cofactor is Mg(2+).

It carries out the reaction hydrogenobyrinate + 2 L-glutamine + 2 ATP + 2 H2O = hydrogenobyrinate a,c-diamide + 2 L-glutamate + 2 ADP + 2 phosphate + 2 H(+). It functions in the pathway cofactor biosynthesis; adenosylcobalamin biosynthesis; cob(II)yrinate a,c-diamide from precorrin-2 (aerobic route): step 9/10. Functionally, catalyzes the ATP-dependent amidation of the two carboxylate groups at positions a and c of hydrogenobyrinate, using either L-glutamine or ammonia as the nitrogen source. This Brucella anthropi (strain ATCC 49188 / DSM 6882 / CCUG 24695 / JCM 21032 / LMG 3331 / NBRC 15819 / NCTC 12168 / Alc 37) (Ochrobactrum anthropi) protein is Hydrogenobyrinate a,c-diamide synthase.